The sequence spans 481 residues: 3-ketoacyl-CoA synthase 8 (481 aa).

The next 2 membrane-spanning stretches (helical) occupy residues 4-24 and 44-64; these read LKMV…AMKG and LQTI…YMLT. The FAE domain maps to 61–358; sequence YMLTRPKPVY…FFITFVKKKY (298 aa). Catalysis depends on residues cysteine 213, histidine 292, histidine 376, histidine 380, histidine 409, and asparagine 413.

Belongs to the thiolase-like superfamily. Chalcone/stilbene synthases family. Expressed in leaves and seedlings.

It is found in the endoplasmic reticulum membrane. It catalyses the reaction a very-long-chain acyl-CoA + malonyl-CoA + H(+) = a very-long-chain 3-oxoacyl-CoA + CO2 + CoA. Its pathway is lipid metabolism; fatty acid biosynthesis. This chain is 3-ketoacyl-CoA synthase 8, found in Arabidopsis thaliana (Mouse-ear cress).